A 510-amino-acid chain; its full sequence is Bone morphogenetic protein 6 (510 aa).

The signal sequence occupies residues 1–20 (MPGLGRRAQWLCWWWGLLCS). The propeptide occupies 21-371 (CGPPPLRPPL…VSEVHVRTTR (351 aa)). 2 disordered regions span residues 87 to 129 (PHRP…RLKS) and 143 to 199 (NDDE…PLTS). Positions 106–116 (PQQQQQQQQQQ) are enriched in low complexity. N-linked (GlcNAc...) asparagine glycans are attached at residues Asn-238, Asn-266, Asn-383, Asn-401, and Asn-451. A disordered region spans residues 370-402 (TRSASSRRRQQSRNRSTQSQDVSRGSGSSDYNG). Over residues 390–401 (DVSRGSGSSDYN) the composition is skewed to polar residues. Intrachain disulfides connect Cys-409/Cys-475, Cys-438/Cys-507, and Cys-442/Cys-509.

This sequence belongs to the TGF-beta family. Interacts with SOSTDC1. Interacts (when glycosylated) with type I receptor ACVR1; the interaction may induce HAMP expression. Interacts with type II receptor ACVR2B. Interacts with Hemojuvelin/HJV. Interacts with ERFE; the interaction inhibits BMP-induced transcription of HAMP. Interacts with BMPR1A/ALK3. Forms heterodimers with BMP2 in vitro; the heterodimer then binds to its receptor BMPR1A /ALK3 and may induce HAMP expression. In terms of tissue distribution, expressed in the lung. Low levels seen in the kidney.

Its subcellular location is the secreted. Growth factor of the TGF-beta superfamily that plays essential roles in many developmental processes including cartilage and bone formation. Also plays an important role in the regulation of HAMP/hepcidin expression and iron metabolism by acting as a ligand for hemojuvelin/HJV. Also acts to promote expression of HAMP, potentially via the interaction with its receptor BMPR1A/ALK3. Initiates the canonical BMP signaling cascade by associating with type I receptor ACVR1 and type II receptor ACVR2B. In turn, ACVR1 propagates signal by phosphorylating SMAD1/5/8 that travel to the nucleus and act as activators and repressors of transcription of target. Can also signal through non-canonical pathway such as TAZ-Hippo signaling cascade to modulate VEGF signaling by regulating VEGFR2 expression. This is Bone morphogenetic protein 6 (Bmp6) from Mus musculus (Mouse).